Consider the following 576-residue polypeptide: Aspartate--tRNA ligase (576 aa).

Glutamate 173 contacts L-aspartate. The tract at residues 197–200 (QLFK) is aspartate. L-aspartate is bound at residue arginine 219. ATP contacts are provided by residues 219 to 221 (RDE) and glutamine 228. Position 438 (histidine 438) interacts with L-aspartate. Glutamate 470 lines the ATP pocket. Residue arginine 477 coordinates L-aspartate. Position 522-525 (522-525 (GLDR)) interacts with ATP.

It belongs to the class-II aminoacyl-tRNA synthetase family. Type 1 subfamily. Homodimer.

It is found in the cytoplasm. It carries out the reaction tRNA(Asp) + L-aspartate + ATP = L-aspartyl-tRNA(Asp) + AMP + diphosphate. Its function is as follows. Catalyzes the attachment of L-aspartate to tRNA(Asp) in a two-step reaction: L-aspartate is first activated by ATP to form Asp-AMP and then transferred to the acceptor end of tRNA(Asp). This chain is Aspartate--tRNA ligase, found in Aster yellows witches'-broom phytoplasma (strain AYWB).